Reading from the N-terminus, the 435-residue chain is Type A flavoprotein fprA (435 aa).

A zinc metallo-hydrolase region spans residues 48–228 (ANGTTYNAYA…PFRSFVAQVL (181 aa)). Fe cation-binding residues include His-98, Glu-100, Asp-102, His-167, Asp-186, and His-243. A Flavodoxin-like domain is found at 276–415 (LLIFYVSAYR…EGRAFGRRLA (140 aa)).

It in the N-terminal section; belongs to the zinc metallo-hydrolase group 3 family. Homodimer. FMN is required as a cofactor. Requires Fe cation as cofactor.

In terms of biological role, low-potential electron donor to a number of redox enzymes. The protein is Type A flavoprotein fprA (fprA) of Rhodobacter capsulatus (Rhodopseudomonas capsulata).